A 202-amino-acid polypeptide reads, in one-letter code: tRNA (pseudouridine(54)-N(1))-methyltransferase (202 aa).

Positions 134 and 155 each coordinate S-adenosyl-L-methionine.

This sequence belongs to the methyltransferase superfamily. TrmY family. As to quaternary structure, homodimer.

Its subcellular location is the cytoplasm. The catalysed reaction is pseudouridine(54) in tRNA + S-adenosyl-L-methionine = N(1)-methylpseudouridine(54) in tRNA + S-adenosyl-L-homocysteine + H(+). Its function is as follows. Specifically catalyzes the N1-methylation of pseudouridine at position 54 (Psi54) in tRNAs. The sequence is that of tRNA (pseudouridine(54)-N(1))-methyltransferase from Thermococcus gammatolerans (strain DSM 15229 / JCM 11827 / EJ3).